The chain runs to 360 residues: Nucleoporin SEH1-B (360 aa).

6 WD repeats span residues Asp-10–Cys-49, Thr-55–Lys-96, Asp-111–Gln-152, Ser-160–Ala-210, Ser-217–Ser-258, and Asn-276–Cys-315.

It belongs to the WD repeat SEC13 family. In terms of assembly, component of the Nup107-160 subcomplex of the nuclear pore complex (NPC). The Nup107-160 subcomplex includes NUP160, NUP133, NUP107, NUP98, NUP85, NUP43, NUP37, SEH1 and SEC13. Component of the GATOR2 subcomplex, composed of MIOS, SEC13, SEH1L, WDR24 and WDR59. The GATOR2 complex interacts with CASTOR1 and CASTOR2; the interaction is negatively regulated by arginine. The GATOR2 complex interacts with SESN1, SESN2 and SESN3; the interaction is negatively regulated by amino acids.

It is found in the chromosome. The protein resides in the centromere. The protein localises to the kinetochore. It localises to the nucleus. Its subcellular location is the nuclear pore complex. It is found in the lysosome membrane. With respect to regulation, the GATOR2 complex is negatively regulated by the upstream amino acid sensors CASTOR1 and SESN2, which sequester the GATOR2 complex in absence of amino acids. In the presence of abundant amino acids, GATOR2 is released from CASTOR1 and SESN2 and activated. Its function is as follows. Component of the Nup107-160 subcomplex of the nuclear pore complex (NPC). The Nup107-160 subcomplex is required for the assembly of a functional NPC. The Nup107-160 subcomplex is also required for normal kinetochore microtubule attachment, mitotic progression and chromosome segregation. This subunit plays a role in recruitment of the Nup107-160 subcomplex to the kinetochore. Functionally, as a component of the GATOR2 complex, functions as an activator of the amino acid-sensing branch of the mTORC1 signaling pathway. The GATOR2 complex indirectly activates mTORC1 through the inhibition of the GATOR1 subcomplex. GATOR2 probably acts as an E3 ubiquitin-protein ligase toward GATOR1. In the presence of abundant amino acids, the GATOR2 complex mediates ubiquitination of the NPRL2 core component of the GATOR1 complex, leading to GATOR1 inactivation. In the absence of amino acids, GATOR2 is inhibited, activating the GATOR1 complex. The sequence is that of Nucleoporin SEH1-B (seh1l-b) from Xenopus laevis (African clawed frog).